Consider the following 800-residue polypeptide: Small ribosomal subunit protein uS3c (800 aa).

The S3-like 1st part stretch occupies residues 1-118 (MGQKVHPSGF…LQVKKDILVK (118 aa)). Residues 119 to 664 (LQKTRQYLTN…FLDCKFEELE (546 aa)) are intervening sequence (IVS). Residues 665–800 (RRKTMWVQNL…TKLVTESTGA (136 aa)) are S3-like 2nd part.

It belongs to the universal ribosomal protein uS3 family. Part of the 30S ribosomal subunit.

The protein resides in the plastid. Its subcellular location is the chloroplast. The chain is Small ribosomal subunit protein uS3c (rps3) from Chlamydomonas moewusii (Chlamydomonas eugametos).